Reading from the N-terminus, the 385-residue chain is Phosphate acyltransferase (385 aa).

Low complexity predominate over residues 1–17 (MAAGTSIGTTPGGSTSP). The interval 1–28 (MAAGTSIGTTPGGSTSPETPPEHGLTGT) is disordered.

It belongs to the PlsX family. In terms of assembly, homodimer. Probably interacts with PlsY.

Its subcellular location is the cytoplasm. The enzyme catalyses a fatty acyl-[ACP] + phosphate = an acyl phosphate + holo-[ACP]. It functions in the pathway lipid metabolism; phospholipid metabolism. Catalyzes the reversible formation of acyl-phosphate (acyl-PO(4)) from acyl-[acyl-carrier-protein] (acyl-ACP). This enzyme utilizes acyl-ACP as fatty acyl donor, but not acyl-CoA. The sequence is that of Phosphate acyltransferase from Dinoroseobacter shibae (strain DSM 16493 / NCIMB 14021 / DFL 12).